A 667-amino-acid polypeptide reads, in one-letter code: Probable potassium transport system protein Kup (667 aa).

12 helical membrane-spanning segments follow: residues 16-36 (GFII…LYTM), 58-78 (VSLI…LIAL), 101-121 (WLII…ALTP), 146-166 (TNVI…QRFG), 167-187 (TGVI…VLGI), 221-241 (IFIL…YSDL), 253-273 (WPFV…WILA), 294-314 (VYLV…LISG), 343-363 (LYIP…VLYF), 373-393 (YGLA…YYLI), 399-419 (PLLA…FFLA), and 424-444 (FMHG…VMVI).

This sequence belongs to the HAK/KUP transporter (TC 2.A.72) family.

The protein resides in the cell membrane. It carries out the reaction K(+)(in) + H(+)(in) = K(+)(out) + H(+)(out). Its function is as follows. Transport of potassium into the cell. Likely operates as a K(+):H(+) symporter. The chain is Probable potassium transport system protein Kup from Streptococcus equi subsp. equi (strain 4047).